Here is a 1120-residue protein sequence, read N- to C-terminus: Transcription-repair-coupling factor (1120 aa).

The region spanning 591 to 756 (DLSNGMLMDR…MTGLKELSII (166 aa)) is the Helicase ATP-binding domain. Position 604-611 (604-611 (GDVGFGKT)) interacts with ATP. The short motif at 709–712 (DEEQ) is the DEEQ box element. The 155-residue stretch at 777–931 (IIRDALLHEH…GFTIASHDMD (155 aa)) folds into the Helicase C-terminal domain.

The protein in the N-terminal section; belongs to the UvrB family. In the C-terminal section; belongs to the helicase family. RecG subfamily.

The protein localises to the cytoplasm. Couples transcription and DNA repair by recognizing RNA polymerase (RNAP) stalled at DNA lesions. Mediates ATP-dependent release of RNAP and its truncated transcript from the DNA, and recruitment of nucleotide excision repair machinery to the damaged site. The protein is Transcription-repair-coupling factor of Rickettsia bellii (strain RML369-C).